Here is a 186-residue protein sequence, read N- to C-terminus: Elongation factor P (186 aa).

The protein belongs to the elongation factor P family.

The protein localises to the cytoplasm. It participates in protein biosynthesis; polypeptide chain elongation. Involved in peptide bond synthesis. Stimulates efficient translation and peptide-bond synthesis on native or reconstituted 70S ribosomes in vitro. Probably functions indirectly by altering the affinity of the ribosome for aminoacyl-tRNA, thus increasing their reactivity as acceptors for peptidyl transferase. In Elusimicrobium minutum (strain Pei191), this protein is Elongation factor P.